The primary structure comprises 392 residues: Extracellular metalloproteinase 4 (392 aa).

Positions 1 to 9 are excised as a propeptide; the sequence is VHSVVDYVS. Asn27 and Asn176 each carry an N-linked (GlcNAc...) asparagine glycan. His193 contributes to the Zn(2+) binding site. Glu194 is an active-site residue. His197 is a Zn(2+) binding site. N-linked (GlcNAc...) asparagine glycans are attached at residues Asn359 and Asn385.

The protein belongs to the peptidase M36 family. Zn(2+) is required as a cofactor.

It is found in the secreted. In terms of biological role, secreted metalloproteinase probably acting as a virulence factor. This chain is Extracellular metalloproteinase 4 (MEP4), found in Trichophyton violaceum.